A 435-amino-acid chain; its full sequence is MKTFNGTFFNLPPDKSISHRTALIGALSNGITEITNYSAGLDNQTTLSVLQSLGVDIQQESFLTNDGYEQRKVVIKSSGLWSLSRSKRELMCNNSGSTIRMLSGILAAQPFRTTLVGDHSLMKRPMRRVAEPLTQMGASIKLSETGAPPIEIEGKKPLSPIQFYQKIPSAQVKSLVIFAALHADGISEIIEPIQTRNHTELMLGLEPELQPDGSRKIVIEGQKNIEAKPFTVPADPSGACFLVALGLLSGKSDIRLKNVGLNHTRAGYLSLLREAGAKLPTENNRTIGGELLGDIIISNDYITKPLRINDAQIVSDIIDEIPMLAVLSAMATGEFELHHAAELRAKESDRIHALVMNLQRLGFVCEEYKDGFCVTGRTHNPTGTIEITTFYDHRIAMSFAIAGHFSNAEIQLDDNSSIAVSFPNFFSLIDSMQKT.

3-phosphoshikimate contacts are provided by Lys-15, Ser-16, and Arg-20. Lys-15 serves as a coordination point for phosphoenolpyruvate. Phosphoenolpyruvate contacts are provided by Gly-96 and Arg-124. 3-phosphoshikimate contacts are provided by Ser-169, Gln-171, Thr-195, Asp-319, and Lys-346. Residue Gln-171 coordinates phosphoenolpyruvate. The Proton acceptor role is filled by Asp-319. The phosphoenolpyruvate site is built by Arg-350 and Arg-394.

This sequence belongs to the EPSP synthase family. As to quaternary structure, monomer.

Its subcellular location is the cytoplasm. The enzyme catalyses 3-phosphoshikimate + phosphoenolpyruvate = 5-O-(1-carboxyvinyl)-3-phosphoshikimate + phosphate. Its pathway is metabolic intermediate biosynthesis; chorismate biosynthesis; chorismate from D-erythrose 4-phosphate and phosphoenolpyruvate: step 6/7. Its function is as follows. Catalyzes the transfer of the enolpyruvyl moiety of phosphoenolpyruvate (PEP) to the 5-hydroxyl of shikimate-3-phosphate (S3P) to produce enolpyruvyl shikimate-3-phosphate and inorganic phosphate. The chain is 3-phosphoshikimate 1-carboxyvinyltransferase from Chloroherpeton thalassium (strain ATCC 35110 / GB-78).